Reading from the N-terminus, the 251-residue chain is Vacuolar protein sorting-associated protein 37D (251 aa).

Residues 93–182 (AENCADKLQR…RRRERSAQPA (90 aa)) enclose the VPS37 C-terminal domain. Residues 174–251 (RRERSAQPAP…RPSQPEPPHR (78 aa)) form a disordered region. Residues 221-251 (PVPPLKGSPGCPLGPAPLLSPRPSQPEPPHR) show a composition bias toward pro residues.

Belongs to the VPS37 family. As to quaternary structure, component of the ESCRT-I complex (endosomal sorting complex required for transport I) which consists of TSG101, VPS28, a VPS37 protein (VPS37A to -D) and MVB12A or MVB12B in a 1:1:1:1 stoichiometry. Interacts with TSG101 and MVB12A. Component of the ESCRT-I complex (endosomal sorting complex required for transport I) which consists of TSG101, VPS28, a VPS37 protein (VPS37A to -D) and UBAP1 in a 1:1:1:1 stoichiometry.

The protein localises to the late endosome membrane. Component of the ESCRT-I complex, a regulator of vesicular trafficking process. Required for the sorting of endocytic ubiquitinated cargos into multivesicular bodies. May be involved in cell growth and differentiation. The polypeptide is Vacuolar protein sorting-associated protein 37D (Homo sapiens (Human)).